The following is a 239-amino-acid chain: Chlorate reductase subunit gamma (239 aa).

A signal peptide spans 1–27; the sequence is MKTNILVKRMAVIGLAVAAACTGAAAA. Heme b contacts are provided by His-74 and Met-138.

Heterotrimer of alpha, beta and gamma subunits. Requires heme b as cofactor.

The protein localises to the periplasm. Its function is as follows. May transfer electrons to the iron-sulfur centers of ClrB. In Ideonella dechloratans, this protein is Chlorate reductase subunit gamma (clrC).